We begin with the raw amino-acid sequence, 180 residues long: Regulator of G-protein signaling 8 (180 aa).

Ser-26 carries the post-translational modification Phosphoserine. Residues 56 to 171 (SFDVLLSHKY…FLRSKMYLDL (116 aa)) form the RGS domain.

Interacts with GNAO1. Interacts with GNAI3.

The protein resides in the cell membrane. It localises to the membrane. Its subcellular location is the perikaryon. The protein localises to the cell projection. It is found in the dendrite. The protein resides in the nucleus. Its function is as follows. Regulates G protein-coupled receptor signaling cascades, including signaling via muscarinic acetylcholine receptor CHRM2 and dopamine receptor DRD2. Inhibits signal transduction by increasing the GTPase activity of G protein alpha subunits, thereby driving them into their inactive GDP-bound form. Modulates the activity of potassium channels that are activated in response to DRD2 and CHRM2 signaling. This chain is Regulator of G-protein signaling 8 (RGS8), found in Homo sapiens (Human).